We begin with the raw amino-acid sequence, 367 residues long: Tubulin-like protein CetZ (367 aa).

Residues glutamine 11–arginine 15, serine 111, glycine 115–glycine 117, glutamate 148, asparagine 176, and asparagine 194 each bind GTP.

This sequence belongs to the CetZ family.

It localises to the cytoplasm. Its function is as follows. Involved in cell shape control. The protein is Tubulin-like protein CetZ of Methanothrix thermoacetophila (strain DSM 6194 / JCM 14653 / NBRC 101360 / PT) (Methanosaeta thermophila).